We begin with the raw amino-acid sequence, 228 residues long: Imidazole glycerol phosphate synthase subunit HisH (228 aa).

One can recognise a Glutamine amidotransferase type-1 domain in the interval 4–218 (DIAVVDYGMG…VTWNPGEHAS (215 aa)). The active-site Nucleophile is Cys83. Residues His193 and Glu195 contribute to the active site.

In terms of assembly, heterodimer of HisH and HisF.

It is found in the cytoplasm. The catalysed reaction is 5-[(5-phospho-1-deoxy-D-ribulos-1-ylimino)methylamino]-1-(5-phospho-beta-D-ribosyl)imidazole-4-carboxamide + L-glutamine = D-erythro-1-(imidazol-4-yl)glycerol 3-phosphate + 5-amino-1-(5-phospho-beta-D-ribosyl)imidazole-4-carboxamide + L-glutamate + H(+). It catalyses the reaction L-glutamine + H2O = L-glutamate + NH4(+). It participates in amino-acid biosynthesis; L-histidine biosynthesis; L-histidine from 5-phospho-alpha-D-ribose 1-diphosphate: step 5/9. In terms of biological role, IGPS catalyzes the conversion of PRFAR and glutamine to IGP, AICAR and glutamate. The HisH subunit catalyzes the hydrolysis of glutamine to glutamate and ammonia as part of the synthesis of IGP and AICAR. The resulting ammonia molecule is channeled to the active site of HisF. This Thiobacillus denitrificans (strain ATCC 25259 / T1) protein is Imidazole glycerol phosphate synthase subunit HisH.